An 83-amino-acid polypeptide reads, in one-letter code: Pigment-dispersing hormone peptides (83 aa).

Positions 1-24 (MRFIILGVLFIAVASMILSNGVMA) are cleaved as a signal peptide. Alanine amide is present on A80.

The protein belongs to the arthropod PDH family. In terms of tissue distribution, strongly expressed in eyestalk tissue and cerebral ganglia (at protein level).

It localises to the secreted. Its function is as follows. The pigment-dispersing hormone causes the migration of the distal retinal pigment into the proximal end of the pigment chromatophore cells and thus decreases the amount of light entering the retinulas. May also function as a neurotransmitter and/or neuromodulator. This Eurydice pulchra (Speckled sea louse) protein is Pigment-dispersing hormone peptides.